Here is a 333-residue protein sequence, read N- to C-terminus: Serine/threonine-protein phosphatase PP1-beta (333 aa).

Positions 63, 65, 91, and 123 each coordinate Mn(2+). Histidine 124 serves as the catalytic Proton donor. Mn(2+) is bound by residues histidine 172 and histidine 247. The segment at 306–333 is disordered; that stretch reads GAGGVGSNRPVTPPRNAPAAQPKKGAKK. The segment covering 322-333 has biased composition (low complexity); it reads APAAQPKKGAKK.

This sequence belongs to the PPP phosphatase family. PP-1 subfamily. In terms of assembly, interacts with lab-1; the interaction is direct. Interacts with knl-1; the interaction is direct. Mn(2+) is required as a cofactor.

The protein resides in the cytoplasm. Its subcellular location is the nucleus. The enzyme catalyses O-phospho-L-seryl-[protein] + H2O = L-seryl-[protein] + phosphate. The catalysed reaction is O-phospho-L-threonyl-[protein] + H2O = L-threonyl-[protein] + phosphate. Its function is as follows. Serine/threonine-protein phosphatase essential for chromosomal dynamics during meiosis and mitosis. Antagonizes the function of air-2 in the regulation of chromosome cohesion. Dephosphorylates histone H3 at 'Ser-10'. Also involved in the activation of chloride channel clh-3 during cell swelling and meiotic maturation. Essential for embryogenesis. This is Serine/threonine-protein phosphatase PP1-beta (gsp-2) from Caenorhabditis briggsae.